Reading from the N-terminus, the 478-residue chain is Multidrug resistance outer membrane protein MdtQ (478 aa).

A signal peptide spans Met-1–Gly-21. Residue Cys-22 is the site of N-palmitoyl cysteine attachment. The S-diacylglycerol cysteine moiety is linked to residue Cys-22.

This sequence belongs to the outer membrane factor (OMF) (TC 1.B.17) family.

The protein resides in the cell outer membrane. Could be involved in resistance to puromycin, acriflavine and tetraphenylarsonium chloride. The protein is Multidrug resistance outer membrane protein MdtQ (mdtQ) of Escherichia coli O157:H7.